We begin with the raw amino-acid sequence, 117 residues long: Ig heavy chain V region 108A (117 aa).

Residues 1 to 19 (MGWSWIFLFLLSGTAGVHS) form the signal peptide. Residues 20–117 (EVQLQQSGPE…EDSAVYYCAR (98 aa)) enclose the Ig-like domain.

The polypeptide is Ig heavy chain V region 108A (Igh-VJ558) (Mus musculus (Mouse)).